A 66-amino-acid chain; its full sequence is MPKQKTHRASAKRFKRTGSGGLKRFRAYTSHRFHGKTKKQRRHLRKASMVHSGDFKRIKAMLTRLK.

The segment covering 1–16 (MPKQKTHRASAKRFKR) has biased composition (basic residues). Positions 1 to 21 (MPKQKTHRASAKRFKRTGSGG) are disordered.

It belongs to the bacterial ribosomal protein bL35 family.

The polypeptide is Large ribosomal subunit protein bL35 (Streptococcus gordonii (strain Challis / ATCC 35105 / BCRC 15272 / CH1 / DL1 / V288)).